The chain runs to 428 residues: MFIDQVKIYVKGGDGGNGMVAYRREKYVPKGGPAGGDGGKGADVVFIVEEGLRTLMDFRYQRHFKADRGQHGMSKGQHGRKSEDLLVKVPPGTVVKDEKTGQILADLVTHGQTAVIAKGGRGGRGNSRFATATNPAPEIAENGEPGQERDVILELKVLADVGLVGFPSVGKSTLLSVVSSARPKIAEYHFTTIVPNLGVVETGDNRSFVMADLPGLIEGAHAGVGLGHQFLRHIERTRVIVHVIDMSGLEGRDPYEDYVTINNELKEYNLRLTERPQVVVANKMDMPDAEENLQAFKEKVGDEVKIFPISAVTKQGVRDLLFEVANLIETTPEFPIHEVVDESDTSVMYKFETEGVKFDITRESDGTFVISGYDIEKTFKMTDFSRDESVRRFARQMRGMGIDEALRARGAKDGDIVKILEYEFEFID.

The Obg domain maps to 1–158; sequence MFIDQVKIYV…RDVILELKVL (158 aa). Positions 159–329 constitute an OBG-type G domain; sequence ADVGLVGFPS…LLFEVANLIE (171 aa). GTP is bound by residues 165-172, 190-194, 212-215, 282-285, and 310-312; these read GFPSVGKS, FTTIV, DLPG, NKMD, and SAV. Mg(2+) is bound by residues Ser172 and Thr192. The 79-residue stretch at 350 to 428 folds into the OCT domain; the sequence is KFETEGVKFD…ILEYEFEFID (79 aa).

Belongs to the TRAFAC class OBG-HflX-like GTPase superfamily. OBG GTPase family. Monomer. The cofactor is Mg(2+).

Its subcellular location is the cytoplasm. In terms of biological role, an essential GTPase which binds GTP, GDP and possibly (p)ppGpp with moderate affinity, with high nucleotide exchange rates and a fairly low GTP hydrolysis rate. Plays a role in control of the cell cycle, stress response, ribosome biogenesis and in those bacteria that undergo differentiation, in morphogenesis control. The polypeptide is GTPase Obg (Bacillus anthracis).